Here is a 282-residue protein sequence, read N- to C-terminus: Caspase-3 (282 aa).

Catalysis depends on residues H131 and C174.

The protein belongs to the peptidase C14A family. As to quaternary structure, heterotetramer that consists of two anti-parallel arranged heterodimers, each one formed by a 17 kDa (p17) and a 12 kDa (p12) subunit.

It localises to the cytoplasm. It catalyses the reaction Strict requirement for an Asp residue at positions P1 and P4. It has a preferred cleavage sequence of Asp-Xaa-Xaa-Asp-|- with a hydrophobic amino-acid residue at P2 and a hydrophilic amino-acid residue at P3, although Val or Ala are also accepted at this position.. In terms of biological role, important mediator of apoptosis. At the onset of apoptosis, it proteolytically cleaves poly(ADP-ribose) polymerase PARP1 at a '216-Asp-|-Gly-217' bond. In Xenopus laevis (African clawed frog), this protein is Caspase-3 (casp3).